Consider the following 247-residue polypeptide: MQVEAHLQKIIEKDGKVHLTLIDPASQTPDRAAEIALAAVEGGTDAIMIGGSTGASGTLLDETVIKIKENIHVPTILFPGSSAGLSKYADAVFFMSLLNSRDLGYVITNQVLGAPLVYRSQIEPISMAYLIVEPGGTVGWVGDAKLIPRKKPEIAAVYALAGKYLGMHYTYLEAGSGADSPVNPEMIGAVKQVLGENKLIVGGGIRNAETAKICTSAGADMIVTGTVVEEVKDVTAKVAEIVSAIKR.

Residues Asp23 and Ser52 each contribute to the Mg(2+) site. Sn-glycerol 1-phosphate contacts are provided by residues Tyr171–Gly177, Gly203–Gly204, and Gly225–Thr226.

This sequence belongs to the GGGP/HepGP synthase family. Group II subfamily. Requires Mg(2+) as cofactor.

The protein resides in the cytoplasm. The enzyme catalyses sn-glycerol 1-phosphate + (2E,6E,10E)-geranylgeranyl diphosphate = sn-3-O-(geranylgeranyl)glycerol 1-phosphate + diphosphate. The protein operates within membrane lipid metabolism; glycerophospholipid metabolism. Prenyltransferase that catalyzes the transfer of the geranylgeranyl moiety of geranylgeranyl diphosphate (GGPP) to the C3 hydroxyl of sn-glycerol-1-phosphate (G1P). This reaction is the first ether-bond-formation step in the biosynthesis of archaeal membrane lipids. This chain is Geranylgeranylglyceryl phosphate synthase, found in Methanosarcina mazei (strain ATCC BAA-159 / DSM 3647 / Goe1 / Go1 / JCM 11833 / OCM 88) (Methanosarcina frisia).